A 93-amino-acid chain; its full sequence is Alpha-defensin 7 (93 aa).

A signal peptide spans 1–19; the sequence is MKTLILLSALVLLAFQVQA. Positions 20-58 are excised as a propeptide; sequence DPIQNTDEETKTEEQPGEDDQAVSVSFGDPEGSSLQEES. Positions 22–56 are disordered; sequence IQNTDEETKTEEQPGEDDQAVSVSFGDPEGSSLQE. 3 disulfide bridges follow: Cys64-Cys92, Cys66-Cys81, and Cys71-Cys91.

It belongs to the alpha-defensin family. In terms of tissue distribution, paneth cells of the small bowel.

The protein resides in the secreted. Its function is as follows. Probably contributes to the antimicrobial barrier function of the small bowel mucosa. This Mus musculus (Mouse) protein is Alpha-defensin 7 (Defa7).